The following is an 858-amino-acid chain: DNA mismatch repair protein MutS (858 aa).

An ATP-binding site is contributed by glycine 611 to serine 618.

Belongs to the DNA mismatch repair MutS family.

This protein is involved in the repair of mismatches in DNA. It is possible that it carries out the mismatch recognition step. This protein has a weak ATPase activity. This Actinobacillus succinogenes (strain ATCC 55618 / DSM 22257 / CCUG 43843 / 130Z) protein is DNA mismatch repair protein MutS.